Here is a 299-residue protein sequence, read N- to C-terminus: Methylsterol monooxygenase 1-2 (299 aa).

A run of 3 helical transmembrane segments spans residues 39 to 59 (CHNI…LVFI), 96 to 116 (FILV…MIEI), and 118 to 138 (SGLP…YFLV). Residues 132–267 (LVVYFLVEDY…FTYCDYIYGT (136 aa)) form the Fatty acid hydroxylase domain. The short motif at 147–151 (HRFFH) is the Histidine box-1 element. The short motif at 160–164 (HHIHH) is the Histidine box-2 element. Residues 189–209 (TFLGPAIAPGHMITFWLWIAL) form a helical membrane-spanning segment. The Histidine box-3 motif lies at 239 to 245 (YHDYHHY).

It belongs to the sterol desaturase family. In terms of assembly, interacts with ACBP1. Fe cation is required as a cofactor. As to expression, expressed in embryo sacs, pollen and trichomes. Observed in leaves, roots, siliques and flowers.

The protein localises to the endoplasmic reticulum membrane. The catalysed reaction is 4,4-dimethyl-5alpha-cholest-7-en-3beta-ol + 6 Fe(II)-[cytochrome b5] + 3 O2 + 5 H(+) = 4alpha-carboxy-4beta-methyl-5alpha-cholest-7-ene-3beta-ol + 6 Fe(III)-[cytochrome b5] + 4 H2O. It catalyses the reaction 24-methylenecycloartanol + 6 Fe(II)-[cytochrome b5] + 3 O2 + 5 H(+) = 4alpha-carboxy-4beta,14alpha-dimethyl-9beta,19-cyclo-5alpha-ergost-24(24(1))-en-3beta-ol + 6 Fe(III)-[cytochrome b5] + 4 H2O. Non-heme iron oxygenase involved in sterols biosynthesis by catalyzing the removal of the first methyl group at the C-4 position. 4,4-dimethyl-9-beta,19-cyclopropylsterols such as 24-methylenecycloartanol are the preferred substrates. Acts as a rate-limiting enzyme in the sterol pathway via interaction with ACBP1; sterols serve as lipid modulators for gene expression of homeodomain-leucine zipper IV transcription factors. Together with SMO1-1, involved in the maintenance of sterol composition to balance auxin and cytokinin activities during embryogenesis. The protein is Methylsterol monooxygenase 1-2 of Arabidopsis thaliana (Mouse-ear cress).